We begin with the raw amino-acid sequence, 821 residues long: Elongator complex protein 2 (821 aa).

WD repeat units lie at residues 56–100, 105–152, 160–200, 205–246, 280–328, 338–377, 385–424, 435–473, 563–607, 610–649, 665–704, 716–760, and 773–821; these read GHTA…VLKS, GHEG…VKCL, GFVL…FQKM, GHED…TSLE, GHEN…GVWL, GNTL…PRQW, GHFD…NQSQ, IHGY…VENF, GHGY…QVQS, YHTL…SAEF, VHSR…YNPM, DVGS…QETK, and SHTL…RCAL.

It belongs to the WD repeat ELP2 family. As to quaternary structure, component of the elongator complex which consists of ELP1, ELP2, ELP3, ELP4, ELP5 and ELP6. Interacts with STAT3 and JAKs.

The protein resides in the cytoplasm. The protein localises to the nucleus. It functions in the pathway tRNA modification; 5-methoxycarbonylmethyl-2-thiouridine-tRNA biosynthesis. Functionally, component of the elongator complex which is required for multiple tRNA modifications, including mcm5U (5-methoxycarbonylmethyl uridine), mcm5s2U (5-methoxycarbonylmethyl-2-thiouridine), and ncm5U (5-carbamoylmethyl uridine). The elongator complex catalyzes the formation of carboxymethyluridine in the wobble base at position 34 in tRNAs. The protein is Elongator complex protein 2 (Elp2) of Rattus norvegicus (Rat).